Reading from the N-terminus, the 447-residue chain is Acyl-CoA (8-3)-desaturase (447 aa).

The residue at position 1 (methionine 1) is an N-acetylmethionine. The Cytoplasmic portion of the chain corresponds to methionine 1 to arginine 124. The Cytochrome b5 heme-binding domain maps to threonine 19 to alanine 97. A helical transmembrane segment spans residues methionine 125 to leucine 145. Topologically, residues aspartate 146 to leucine 160 are lumenal. A helical transmembrane segment spans residues valine 161–leucine 180. Residues glutamine 181–tyrosine 268 are Cytoplasmic-facing. The short motif at histidine 182 to histidine 186 is the Histidine box-1 element. The Histidine box-2 signature appears at histidine 219 to histidine 223. The helical transmembrane segment at phenylalanine 269 to phenylalanine 289 threads the bilayer. Residues valine 290 to arginine 308 are Lumenal-facing. The chain crosses the membrane as a helical span at residues isoleucine 309 to valine 329. Residues arginine 330–glutamine 447 are Cytoplasmic-facing. The short motif at glutamine 385 to histidine 389 is the Histidine box-3 element.

Belongs to the fatty acid desaturase type 1 family. In terms of tissue distribution, highly expressed in the adrenal gland, liver, brain, and testis, tissues where lipogenesis and steroidogenesis are active. Expressed in colonic mucosa.

The protein localises to the endoplasmic reticulum membrane. It is found in the mitochondrion. The enzyme catalyses (8Z,11Z,14Z)-eicosatrienoyl-CoA + 2 Fe(II)-[cytochrome b5] + O2 + 2 H(+) = (5Z,8Z,11Z,14Z)-eicosatetraenoyl-CoA + 2 Fe(III)-[cytochrome b5] + 2 H2O. The catalysed reaction is (8Z,11Z,14Z,17Z)-eicosatetraenoyl-CoA + 2 Fe(II)-[cytochrome b5] + O2 + 2 H(+) = (5Z,8Z,11Z,14Z,17Z)-eicosapentaenoyl-CoA + 2 Fe(III)-[cytochrome b5] + 2 H2O. It carries out the reaction (11E)-octadecenoyl-CoA + 2 Fe(II)-[cytochrome b5] + O2 + 2 H(+) = (5Z,11E)-octadecadienoyl-CoA + 2 Fe(III)-[cytochrome b5] + 2 H2O. It participates in lipid metabolism; polyunsaturated fatty acid biosynthesis. In terms of biological role, acts as a front-end fatty acyl-coenzyme A (CoA) desaturase that introduces a cis double bond at carbon 5 located between a preexisting double bond and the carboxyl end of the fatty acyl chain. Involved in biosynthesis of highly unsaturated fatty acids (HUFA) from the essential polyunsaturated fatty acids (PUFA) linoleic acid (LA) (18:2n-6) and alpha-linolenic acid (ALA) (18:3n-3) precursors. Specifically, desaturates dihomo-gamma-linoleoate (DGLA) (20:3n-6) and eicosatetraenoate (ETA) (20:4n-3) to generate arachidonate (AA) (20:4n-6) and eicosapentaenoate (EPA) (20:5n-3), respectively. As a rate limiting enzyme for DGLA (20:3n-6) and AA (20:4n-6)-derived eicosanoid biosynthesis, controls the metabolism of inflammatory lipids like prostaglandin E2, critical for efficient acute inflammatory response and maintenance of epithelium homeostasis. Contributes to membrane phospholipid biosynthesis by providing AA (20:4n-6) as a major acyl chain esterified into phospholipids. In particular, regulates phosphatidylinositol-4,5-bisphosphate levels, modulating inflammatory cytokine production in T-cells. Also desaturates (11E)-octadecenoate (trans-vaccenoate)(18:1n-9), a metabolite in the biohydrogenation pathway of LA (18:2n-6). The protein is Acyl-CoA (8-3)-desaturase of Mus musculus (Mouse).